The sequence spans 421 residues: Probable pectate lyase C (421 aa).

Positions 1-19 are cleaved as a signal peptide; the sequence is MQPLHTLLALLPLCRSTTA. N-linked (GlcNAc...) asparagine glycans are attached at residues Asn-164 and Asn-201. The active site involves Arg-204. The region spanning 257–292 is the EF-hand domain; the sequence is NENFHGYVENNYYDPDQDGTLNGNELGVSSSNYGGM. Positions 270, 272, 274, 276, and 281 each coordinate Ca(2+). A disordered region spans residues 353-376; sequence DFGGVGDLDGGETPTDTDGDGIPD. Positions 367 to 376 are enriched in acidic residues; the sequence is TDTDGDGIPD.

The protein belongs to the polysaccharide lyase 1 family. Requires Ca(2+) as cofactor.

It localises to the secreted. It catalyses the reaction Eliminative cleavage of (1-&gt;4)-alpha-D-galacturonan to give oligosaccharides with 4-deoxy-alpha-D-galact-4-enuronosyl groups at their non-reducing ends.. Pectinolytic enzyme consist of four classes of enzymes: pectin lyase, polygalacturonase, pectin methylesterase and rhamnogalacturonase. Among pectinolytic enzymes, pectin lyase is the most important in depolymerization of pectin, since it cleaves internal glycosidic bonds of highly methylated pectins. Favors pectate, the anion, over pectin, the methyl ester. This is Probable pectate lyase C (plyC) from Emericella nidulans (strain FGSC A4 / ATCC 38163 / CBS 112.46 / NRRL 194 / M139) (Aspergillus nidulans).